A 767-amino-acid chain; its full sequence is MDRSRVLEQLIPELTRLLSLLDHEYLSDSTLEKKMAVASLLQSLQPLPAKEVSFLYVNTADLHSGPSFVESLFEEFDCDLGDLRDMSDDGERSKEASPEPIKSPSLRSTADVPPPLPNKPPPEDYYEEALPLGPGKSPEYISSHNGCSPAQSIVDGYYEDADSSYPTTRMNGESKSSYNDSDAMSSSYESYDEEEEEEKGRQPKHQWPSEEASMHLVRDCRICAFLLRKKRFGQWAKQLTVIKEEQLLCYKSSKDRQPHLRLPLDVCTVVYVPKDSRHKRHELRFSQGATEVLVLALQSREQAEEWLKVIREVSRPIGGAESLEVPRSPVILCKLDQDKRLSQEKQNSDSDSLGMNDSSSTLSRREACEHGKGKKNSLAELKDSMSRAAGRKITRIISFSKKKALSEDLQTFSSEDEAPCCGYLNVLVNHGWKERWCRLRCNTLYFHKDRTDLHTHVNAIALRGCEVAPGFGPRHPFAFRILRNRQEVAILEASCSEDMGRWLGLLLVEMGSKVTPEALHYDYVDVETLTSIVSAGRNSFLYAQSCQDQWPEPRIYDEVPYEKVQDEEPQRPTGAQVKRHASSCSEKSHRADPQVKVKRHASSANQYKYGKNRAEEDARRYLVEKERLEKEKETIRTELTALRQEKKELKEAIRNNPGAKLKALEEAVATLDAQCRAKEEQRIDLELKLVAVKERLQQSLAGGPALGLSVSSKSKSQETTNKPQSSVPEQSLPVNCVSEMRKRSPSIVTSNQGRVLQKAKEWEMKKT.

The span at 83–97 (LRDMSDDGERSKEAS) shows a compositional bias: basic and acidic residues. The tract at residues 83 to 145 (LRDMSDDGER…KSPEYISSHN (63 aa)) is disordered. Residues Ser87, Ser93, Ser97, Ser103, and Ser152 each carry the phosphoserine modification. Residues 164–173 (SYPTTRMNGE) are compositionally biased toward polar residues. A disordered region spans residues 164 to 210 (SYPTTRMNGESKSSYNDSDAMSSSYESYDEEEEEEKGRQPKHQWPSE). Over residues 174–189 (SKSSYNDSDAMSSSYE) the composition is skewed to low complexity. Positions 219-315 (DCRICAFLLR…WLKVIREVSR (97 aa)) constitute a PH 1 domain. A phosphoserine mark is found at Ser328 and Ser342. Residues 341-381 (LSQEKQNSDSDSLGMNDSSSTLSRREACEHGKGKKNSLAEL) are disordered. Over residues 349–362 (DSDSLGMNDSSSTL) the composition is skewed to polar residues. Residues 417 to 511 (EAPCCGYLNV…WLGLLLVEMG (95 aa)) enclose the PH 2 domain. A Phosphotyrosine modification is found at Tyr556. Residues 563 to 605 (KVQDEEPQRPTGAQVKRHASSCSEKSHRADPQVKVKRHASSAN) are disordered. Residues 586 to 595 (EKSHRADPQV) are compositionally biased toward basic and acidic residues. The stretch at 610 to 700 (GKNRAEEDAR…AVKERLQQSL (91 aa)) forms a coiled coil. Residues 704–767 (PALGLSVSSK…KAKEWEMKKT (64 aa)) are disordered. The span at 709 to 733 (SVSSKSKSQETTNKPQSSVPEQSLP) shows a compositional bias: polar residues. Ser746 is subject to Phosphoserine. Residues 758-767 (KAKEWEMKKT) show a composition bias toward basic and acidic residues.

As to quaternary structure, interacts with CTTN.

It is found in the cytoplasm. Its subcellular location is the cell projection. It localises to the podosome. The protein resides in the invadopodium. May be involved in podosome and invadosome formation. The protein is Actin filament-associated protein 1-like 1 (Afap1l1) of Rattus norvegicus (Rat).